We begin with the raw amino-acid sequence, 291 residues long: Putative butyrophilin-like protein 10 pseudogene (291 aa).

Positions methionine 1–alanine 26 are cleaved as a signal peptide. The region spanning serine 27–alanine 146 is the Ig-like V-type domain. The Extracellular segment spans residues serine 27 to alanine 254. A disulfide bridge links cysteine 54 with cysteine 128. Residue asparagine 59 is glycosylated (N-linked (GlcNAc...) asparagine). A helical membrane pass occupies residues alanine 255–tryptophan 275. The Cytoplasmic portion of the chain corresponds to lysine 276–glutamate 291.

The protein belongs to the immunoglobulin superfamily. BTN/MOG family.

It is found in the membrane. The polypeptide is Putative butyrophilin-like protein 10 pseudogene (Homo sapiens (Human)).